Reading from the N-terminus, the 485-residue chain is Probable coniferyl aldehyde dehydrogenase (485 aa).

Residues glutamate 226 and cysteine 260 contribute to the active site.

It belongs to the aldehyde dehydrogenase family.

It carries out the reaction (E)-coniferaldehyde + NADP(+) + H2O = (E)-ferulate + NADPH + 2 H(+). The catalysed reaction is (E)-coniferaldehyde + NAD(+) + H2O = (E)-ferulate + NADH + 2 H(+). This is Probable coniferyl aldehyde dehydrogenase (calB) from Caulobacter vibrioides (strain ATCC 19089 / CIP 103742 / CB 15) (Caulobacter crescentus).